A 279-amino-acid polypeptide reads, in one-letter code: Sulfur carrier protein FdhD (279 aa).

Cys-122 functions as the Cysteine persulfide intermediate in the catalytic mechanism.

The protein belongs to the FdhD family.

It localises to the cytoplasm. In terms of biological role, required for formate dehydrogenase (FDH) activity. Acts as a sulfur carrier protein that transfers sulfur from IscS to the molybdenum cofactor prior to its insertion into FDH. This chain is Sulfur carrier protein FdhD, found in Thermoplasma volcanium (strain ATCC 51530 / DSM 4299 / JCM 9571 / NBRC 15438 / GSS1).